A 325-amino-acid chain; its full sequence is Holliday junction branch migration complex subunit RuvB (325 aa).

The interval 1–181 (MENRLINPVE…FGIVQRLEFY (181 aa)) is large ATPase domain (RuvB-L). ATP contacts are provided by residues Ile-20, Arg-21, Gly-62, Lys-65, Thr-66, Thr-67, 128–130 (EDF), Arg-171, Tyr-181, and Arg-218. Thr-66 provides a ligand contact to Mg(2+). The tract at residues 182 to 252 (NIEDLTTIVS…IADSALDMLA (71 aa)) is small ATPAse domain (RuvB-S). Positions 255–325 (RRGLDHLDRR…VLTQMAIDQL (71 aa)) are head domain (RuvB-H). The DNA site is built by Arg-291, Arg-310, and Arg-315.

It belongs to the RuvB family. As to quaternary structure, homohexamer. Forms an RuvA(8)-RuvB(12)-Holliday junction (HJ) complex. HJ DNA is sandwiched between 2 RuvA tetramers; dsDNA enters through RuvA and exits via RuvB. An RuvB hexamer assembles on each DNA strand where it exits the tetramer. Each RuvB hexamer is contacted by two RuvA subunits (via domain III) on 2 adjacent RuvB subunits; this complex drives branch migration. In the full resolvosome a probable DNA-RuvA(4)-RuvB(12)-RuvC(2) complex forms which resolves the HJ.

It localises to the cytoplasm. It carries out the reaction ATP + H2O = ADP + phosphate + H(+). Its function is as follows. The RuvA-RuvB-RuvC complex processes Holliday junction (HJ) DNA during genetic recombination and DNA repair, while the RuvA-RuvB complex plays an important role in the rescue of blocked DNA replication forks via replication fork reversal (RFR). RuvA specifically binds to HJ cruciform DNA, conferring on it an open structure. The RuvB hexamer acts as an ATP-dependent pump, pulling dsDNA into and through the RuvAB complex. RuvB forms 2 homohexamers on either side of HJ DNA bound by 1 or 2 RuvA tetramers; 4 subunits per hexamer contact DNA at a time. Coordinated motions by a converter formed by DNA-disengaged RuvB subunits stimulates ATP hydrolysis and nucleotide exchange. Immobilization of the converter enables RuvB to convert the ATP-contained energy into a lever motion, pulling 2 nucleotides of DNA out of the RuvA tetramer per ATP hydrolyzed, thus driving DNA branch migration. The RuvB motors rotate together with the DNA substrate, which together with the progressing nucleotide cycle form the mechanistic basis for DNA recombination by continuous HJ branch migration. Branch migration allows RuvC to scan DNA until it finds its consensus sequence, where it cleaves and resolves cruciform DNA. In Psychrobacter sp. (strain PRwf-1), this protein is Holliday junction branch migration complex subunit RuvB.